Reading from the N-terminus, the 203-residue chain is Small ribosomal subunit protein uS5 (203 aa).

A compositionally biased stretch (basic and acidic residues) spans 1 to 18; that stretch reads MENNVKKETIVDSEKVEK. The segment at 1–36 is disordered; the sequence is MENNVKKETIVDSEKVEKQQPVTAPVVNKKENTQPK. An S5 DRBM domain is found at 49 to 112; sequence FEERVVKIKR…KNANNNLIKV (64 aa).

Belongs to the universal ribosomal protein uS5 family. Part of the 30S ribosomal subunit. Contacts proteins S4 and S8.

In terms of biological role, with S4 and S12 plays an important role in translational accuracy. Functionally, located at the back of the 30S subunit body where it stabilizes the conformation of the head with respect to the body. The polypeptide is Small ribosomal subunit protein uS5 (Ureaplasma urealyticum serovar 10 (strain ATCC 33699 / Western)).